Here is a 376-residue protein sequence, read N- to C-terminus: MSDTLDLAQELIRRRSVTPEDAGCQQLIAERLAPLGFEAHHLRFEDVDNLWLRRGSEGPVLAFAGHTDVVPTGPVEKWSSDPFQPQIRNGQLYGRGAADMKSSIAAFVIACEAFLKDHPDHKGSIALLITSDEEGPSVNGTVKVVEWLEARGEKITWALVGEPSSTERLGDVIKNGRRGSLSGVLRVRGQQGHVAYPHLADNPVHRALPALAELAAIQWDEGNEHFPPTSFQISNIHAGTGAENVIPGELEVMFNLRFSTEQTDEGIRTRVHAVLDAHGLDYELSWRLSGHPFLTAEGELVEAASAAIREVMGLDTELSTAGGTSDGRFIAPTGAQVVELGPLNASIHKIDEHVRIEDLDALSRIYTGILKRLLVE.

Zn(2+) is bound at residue histidine 66. Aspartate 68 is an active-site residue. Aspartate 99 is a binding site for Zn(2+). The Proton acceptor role is filled by glutamate 133. 3 residues coordinate Zn(2+): glutamate 134, glutamate 162, and histidine 348.

Belongs to the peptidase M20A family. DapE subfamily. As to quaternary structure, homodimer. Zn(2+) is required as a cofactor. It depends on Co(2+) as a cofactor.

The catalysed reaction is N-succinyl-(2S,6S)-2,6-diaminopimelate + H2O = (2S,6S)-2,6-diaminopimelate + succinate. It participates in amino-acid biosynthesis; L-lysine biosynthesis via DAP pathway; LL-2,6-diaminopimelate from (S)-tetrahydrodipicolinate (succinylase route): step 3/3. Catalyzes the hydrolysis of N-succinyl-L,L-diaminopimelic acid (SDAP), forming succinate and LL-2,6-diaminopimelate (DAP), an intermediate involved in the bacterial biosynthesis of lysine and meso-diaminopimelic acid, an essential component of bacterial cell walls. The chain is Succinyl-diaminopimelate desuccinylase from Thioalkalivibrio sulfidiphilus (strain HL-EbGR7).